We begin with the raw amino-acid sequence, 182 residues long: Mitochondrial FAD-linked sulfhydryl oxidase erv1 (182 aa).

In terms of domain architecture, ERV/ALR sulfhydryl oxidase spans 75–177 (RLPDVAELGR…FNCQVWSKKA (103 aa)). Residues 81–87 (ELGRSTW), His-91, and Tyr-120 contribute to the FAD site. Intrachain disulfides connect Cys-122/Cys-125 and Cys-153/Cys-170. FAD-binding positions include 153–165 (CEAHNDVNERLGK) and 176–177 (KA).

Requires FAD as cofactor.

It localises to the mitochondrion intermembrane space. It catalyses the reaction 2 R'C(R)SH + O2 = R'C(R)S-S(R)CR' + H2O2. Its function is as follows. FAD-dependent sulfhydryl oxidase that catalyzes disulfide bond formation. Required for the import and folding of small cysteine-containing proteins in the mitochondrial intermembrane space (IMS). The protein is Mitochondrial FAD-linked sulfhydryl oxidase erv1 (erv1) of Schizosaccharomyces pombe (strain 972 / ATCC 24843) (Fission yeast).